The following is a 396-amino-acid chain: Digeranylgeranylglycerophospholipid reductase (396 aa).

The FAD site is built by glycine 14, glutamate 33, cysteine 44, glycine 45, glycine 47, arginine 100, alanine 124, glutamate 162, aspartate 283, glycine 295, and isoleucine 296. Positions 338 and 374 each coordinate a 2,3-bis-O-(geranylgeranyl)-sn-glycerol 1-phospholipid.

Belongs to the geranylgeranyl reductase family. DGGGPL reductase subfamily. Monomer. Requires FAD as cofactor.

Its subcellular location is the cell membrane. It carries out the reaction 2,3-bis-O-(phytanyl)-sn-glycerol 1-phosphate + 8 NADP(+) = 2,3-bis-O-(geranylgeranyl)-sn-glycerol 1-phosphate + 8 NADPH + 8 H(+). It catalyses the reaction 2,3-bis-O-(phytanyl)-sn-glycerol 1-phosphate + 8 NAD(+) = 2,3-bis-O-(geranylgeranyl)-sn-glycerol 1-phosphate + 8 NADH + 8 H(+). The enzyme catalyses a 2,3-bis-O-phytanyl-sn-glycerol 1-phospholipid + 8 A = a 2,3-bis-O-(geranylgeranyl)-sn-glycerol 1-phospholipid + 8 AH2. The catalysed reaction is CDP-2,3-bis-O-(geranylgeranyl)-sn-glycerol + 8 AH2 = CDP-2,3-bis-O-(phytanyl)-sn-glycerol + 8 A. It carries out the reaction archaetidylserine + 8 AH2 = 2,3-bis-O-phytanyl-sn-glycero-3-phospho-L-serine + 8 A. It participates in membrane lipid metabolism; glycerophospholipid metabolism. Is involved in the reduction of 2,3-digeranylgeranylglycerophospholipids (unsaturated archaeols) into 2,3-diphytanylglycerophospholipids (saturated archaeols) in the biosynthesis of archaeal membrane lipids. Catalyzes the formation of archaetidic acid (2,3-di-O-phytanyl-sn-glyceryl phosphate) from 2,3-di-O-geranylgeranylglyceryl phosphate (DGGGP) via the hydrogenation of each double bond of the isoprenoid chains. Can use both NADH and NADPH as electron donors. Also catalyzes the reduction of 2,3-di-O-geranylgeranylglyceryl phosphate analogs such as 2,3-di-O-phytyl-sn-glyceryl phosphate (DPHGP), 3-O-(2,3-di-O-phytyl-sn-glycero-phospho)-sn-glycerol (DPHGPG) and 2,3-di-O-phytyl-sn-glycero-phosphoethanolamine (DPHGPE). Is not active toward 2,3-di-O-geranylgeranylglycerol. Is also probably able to reduce double bonds of geranyl groups in CDP-2,3-bis-O-(geranylgeranyl)-sn-glycerol and archaetidylserine, thus acting at various stages in the biosynthesis of archaeal membrane lipids. This chain is Digeranylgeranylglycerophospholipid reductase, found in Thermoplasma acidophilum (strain ATCC 25905 / DSM 1728 / JCM 9062 / NBRC 15155 / AMRC-C165).